The chain runs to 881 residues: EEF1AKMT4-ECE2 readthrough transcript protein (881 aa).

The interval 1-160 (MASPRTPVSP…VHTVDQVLSE (160 aa)) is methyltransferase-like region. Topologically, residues 1 to 178 (MASPRTPVSP…QLFGSHTQLE (178 aa)) are cytoplasmic. The S-adenosyl-L-methionine site is built by Trp-26 and Tyr-30. Position 39 is a phosphotyrosine (Tyr-39). S-adenosyl-L-methionine-binding positions include Trp-41, Gly-66, 88–89 (DY), 113–114 (DV), and Lys-130. The residue at position 174 (His-174) is a Phosphoserine. The chain crosses the membrane as a helical; Signal-anchor for type II membrane protein span at residues 179-199 (LVLAGLILVLAALLLGCLVAL). At 200–881 (WVHRDPAHST…MNPGQLCEVW (682 aa)) the chain is on the lumenal side. One can recognise a Peptidase M13 domain in the interval 209–881 (TCVTEACIRV…MNPGQLCEVW (673 aa)). Intrachain disulfides connect Cys-210-Cys-215, Cys-233-Cys-866, Cys-241-Cys-826, Cys-297-Cys-546, and Cys-755-Cys-878. Residues Asn-277, Asn-281, Asn-322, Asn-382, Asn-427, Asn-494, and Asn-650 are each glycosylated (N-linked (GlcNAc...) asparagine). His-718 serves as a coordination point for Zn(2+). Residue Glu-719 is part of the active site. His-722 serves as a coordination point for Zn(2+). 2 N-linked (GlcNAc...) asparagine glycosylation sites follow: Asn-743 and Asn-751. Glu-778 provides a ligand contact to Zn(2+). Residue Asp-782 is the Proton donor of the active site.

It in the N-terminal section; belongs to the methyltransferase superfamily. The protein in the C-terminal section; belongs to the peptidase M13 family. The cofactor is Zn(2+). As to expression, expressed at high levels in central nervous system. Expressed in adrenal glands, ovary and uterus, and at low levels in heart.

It is found in the golgi apparatus membrane. It localises to the cytoplasmic vesicle. Its subcellular location is the secretory vesicle membrane. It catalyses the reaction Hydrolysis of the 21-Trp-|-Val-22 bond in big endothelin to form endothelin 1.. With respect to regulation, inhibited by phosphoramidon. In terms of biological role, converts big endothelin-1 to endothelin-1. May also have methyltransferase activity. May play a role in amyloid-beta processing. The polypeptide is EEF1AKMT4-ECE2 readthrough transcript protein (Mus musculus (Mouse)).